The sequence spans 488 residues: Alpha,alpha-trehalose-phosphate synthase [UDP-forming] 56 kDa subunit (488 aa).

Tyr102 and Asp156 together coordinate D-glucose 6-phosphate. UDP contacts are provided by Arg293 and Lys298. Residues Arg293 and Lys298 each contribute to the UDP-alpha-D-glucose site. Arg331 is a D-glucose 6-phosphate binding site. Residues Ile370 and Leu396–Glu400 each bind UDP. UDP-alpha-D-glucose-binding positions include Ile370 and Asp392–Glu400.

Belongs to the glycosyltransferase 20 family. In terms of assembly, trehalose synthase/phosphatase complex contains three or four polypeptides of 56 kDa (TPS1), 102 kDa (TPS2), 115 kDa (TPS3) and 123 kDa (TSL1).

It carries out the reaction D-glucose 6-phosphate + UDP-alpha-D-glucose = alpha,alpha-trehalose 6-phosphate + UDP + H(+). The protein operates within carbohydrate biosynthesis. In terms of biological role, synthase catalytic subunit of the trehalose synthase complex that catalyzes the production of trehalose from glucose-6-phosphate and UDP-alpha-D-glucose in a two step process. Can function independently of the complex. The chain is Alpha,alpha-trehalose-phosphate synthase [UDP-forming] 56 kDa subunit from Kluyveromyces lactis (strain ATCC 8585 / CBS 2359 / DSM 70799 / NBRC 1267 / NRRL Y-1140 / WM37) (Yeast).